We begin with the raw amino-acid sequence, 193 residues long: NAD(P)H-quinone oxidoreductase subunit J (193 aa).

The tract at residues 1–21 is disordered; sequence MSDSAPTNPTPTNPAPEESAS.

The protein belongs to the complex I 30 kDa subunit family. As to quaternary structure, NDH-1 can be composed of about 15 different subunits; different subcomplexes with different compositions have been identified which probably have different functions.

The protein resides in the cellular thylakoid membrane. It carries out the reaction a plastoquinone + NADH + (n+1) H(+)(in) = a plastoquinol + NAD(+) + n H(+)(out). The catalysed reaction is a plastoquinone + NADPH + (n+1) H(+)(in) = a plastoquinol + NADP(+) + n H(+)(out). In terms of biological role, NDH-1 shuttles electrons from an unknown electron donor, via FMN and iron-sulfur (Fe-S) centers, to quinones in the respiratory and/or the photosynthetic chain. The immediate electron acceptor for the enzyme in this species is believed to be plastoquinone. Couples the redox reaction to proton translocation, and thus conserves the redox energy in a proton gradient. Cyanobacterial NDH-1 also plays a role in inorganic carbon-concentration. The protein is NAD(P)H-quinone oxidoreductase subunit J of Synechococcus sp. (strain CC9902).